A 228-amino-acid chain; its full sequence is Probable C4-dicarboxylate response regulator DctR (228 aa).

Residues 7–123 (TVLLIEDDPM…RMKQALEQYR (117 aa)) enclose the Response regulatory domain. Residue aspartate 58 is modified to 4-aspartylphosphate. The H-T-H motif DNA-binding region spans 180-199 (AEEVADGVGIARVTARRYLE).

Phosphorylated by DctS.

Its subcellular location is the cytoplasm. Its function is as follows. Member of the two-component regulatory system DctS/DctR. Essential for expression of DctP. In Priestia megaterium (Bacillus megaterium), this protein is Probable C4-dicarboxylate response regulator DctR (dctR).